Here is a 439-residue protein sequence, read N- to C-terminus: Serine--tRNA ligase (439 aa).

237–239 (TAE) contacts L-serine. ATP is bound at residue 268–270 (RAE). Residue E291 coordinates L-serine. Residue 362–365 (EISS) coordinates ATP. S397 contacts L-serine.

Belongs to the class-II aminoacyl-tRNA synthetase family. Type-1 seryl-tRNA synthetase subfamily. Homodimer. The tRNA molecule binds across the dimer.

The protein resides in the cytoplasm. It catalyses the reaction tRNA(Ser) + L-serine + ATP = L-seryl-tRNA(Ser) + AMP + diphosphate + H(+). It carries out the reaction tRNA(Sec) + L-serine + ATP = L-seryl-tRNA(Sec) + AMP + diphosphate + H(+). Its pathway is aminoacyl-tRNA biosynthesis; selenocysteinyl-tRNA(Sec) biosynthesis; L-seryl-tRNA(Sec) from L-serine and tRNA(Sec): step 1/1. Functionally, catalyzes the attachment of serine to tRNA(Ser). Is also able to aminoacylate tRNA(Sec) with serine, to form the misacylated tRNA L-seryl-tRNA(Sec), which will be further converted into selenocysteinyl-tRNA(Sec). The protein is Serine--tRNA ligase of Afipia carboxidovorans (strain ATCC 49405 / DSM 1227 / KCTC 32145 / OM5) (Oligotropha carboxidovorans).